The sequence spans 149 residues: Large ribosomal subunit protein bL9 (149 aa).

The protein belongs to the bacterial ribosomal protein bL9 family.

Functionally, binds to the 23S rRNA. The sequence is that of Large ribosomal subunit protein bL9 from Actinobacillus succinogenes (strain ATCC 55618 / DSM 22257 / CCUG 43843 / 130Z).